The primary structure comprises 258 residues: Imidazole glycerol phosphate synthase subunit HisF (258 aa).

Residues aspartate 11 and aspartate 130 contribute to the active site.

Belongs to the HisA/HisF family. In terms of assembly, heterodimer of HisH and HisF.

Its subcellular location is the cytoplasm. It carries out the reaction 5-[(5-phospho-1-deoxy-D-ribulos-1-ylimino)methylamino]-1-(5-phospho-beta-D-ribosyl)imidazole-4-carboxamide + L-glutamine = D-erythro-1-(imidazol-4-yl)glycerol 3-phosphate + 5-amino-1-(5-phospho-beta-D-ribosyl)imidazole-4-carboxamide + L-glutamate + H(+). It participates in amino-acid biosynthesis; L-histidine biosynthesis; L-histidine from 5-phospho-alpha-D-ribose 1-diphosphate: step 5/9. IGPS catalyzes the conversion of PRFAR and glutamine to IGP, AICAR and glutamate. The HisF subunit catalyzes the cyclization activity that produces IGP and AICAR from PRFAR using the ammonia provided by the HisH subunit. The sequence is that of Imidazole glycerol phosphate synthase subunit HisF from Yersinia pestis (strain Pestoides F).